The chain runs to 643 residues: Phosphomethylpyrimidine synthase (643 aa).

Substrate-binding positions include Asn248, Met277, Tyr306, His342, 362-364 (SRG), 403-406 (DGLR), and Glu442. His446 is a binding site for Zn(2+). Tyr469 serves as a coordination point for substrate. His510 contributes to the Zn(2+) binding site. Residues Cys590, Cys593, and Cys598 each contribute to the [4Fe-4S] cluster site.

This sequence belongs to the ThiC family. As to quaternary structure, homodimer. Requires [4Fe-4S] cluster as cofactor.

It catalyses the reaction 5-amino-1-(5-phospho-beta-D-ribosyl)imidazole + S-adenosyl-L-methionine = 4-amino-2-methyl-5-(phosphooxymethyl)pyrimidine + CO + 5'-deoxyadenosine + formate + L-methionine + 3 H(+). Its pathway is cofactor biosynthesis; thiamine diphosphate biosynthesis. Its function is as follows. Catalyzes the synthesis of the hydroxymethylpyrimidine phosphate (HMP-P) moiety of thiamine from aminoimidazole ribotide (AIR) in a radical S-adenosyl-L-methionine (SAM)-dependent reaction. The sequence is that of Phosphomethylpyrimidine synthase from Burkholderia cenocepacia (strain ATCC BAA-245 / DSM 16553 / LMG 16656 / NCTC 13227 / J2315 / CF5610) (Burkholderia cepacia (strain J2315)).